We begin with the raw amino-acid sequence, 351 residues long: Paired box protein 2 homolog (351 aa).

Positions 91–217 form a DNA-binding region, paired; it reads SHTGVNQLGG…SSINRIVRNK (127 aa). Residues 94–150 form a PAI subdomain region; it reads GVNQLGGVFVNGRPLPDTIRAQIVEMSQHGTRPCDISRQLKVSHGCVSKILGRYYST. An RED subdomain region spans residues 169-217; sequence RVVECIAGYKRANPTMFAWEIRQKLIEDQICGEENVPSVSSINRIVRNK. Over residues 226–246 the composition is skewed to polar residues; sequence PTSVTPSVARPSSATSQNQRS. A disordered region spans residues 226–258; that stretch reads PTSVTPSVARPSSATSQNQRSPPRGVQQHMQQS.

It localises to the nucleus. Its subcellular location is the chromosome. Functionally, transcription factor. Involved in negatively modulating apoptosis in germline and somatic cells, acting in partial redundancy with transcription factor egl-38/PAX5, probably by directly regulating transcription of apoptosis regulator ced-9. May bind to the DNA sequence motif 5'-GTAACG-3' in regulatory elements. This Caenorhabditis elegans protein is Paired box protein 2 homolog.